Here is a 190-residue protein sequence, read N- to C-terminus: uncharacterized protein (190 aa).

An N-terminal signal peptide occupies residues 1–15; sequence MKVFAYIALATVVAG.

It localises to the secreted. This is an uncharacterized protein from Arthroderma benhamiae (strain ATCC MYA-4681 / CBS 112371) (Trichophyton mentagrophytes).